The chain runs to 57 residues: Potassium channel toxin alpha-KTx 8.7 (57 aa).

Residues 1-28 (MSRLYAIILIALVFNVIMTIMPDMKVEA) form the signal peptide. 3 disulfide bridges follow: C31–C47, C34–C52, and C38–C54.

As to expression, expressed by the venom gland.

The protein localises to the secreted. Functionally, inhibits voltage-gated potassium channel rKv1.1/KCNA1 at nanomolar ranges (IC(50)=8.5 nM). In Mesobuthus eupeus (Lesser Asian scorpion), this protein is Potassium channel toxin alpha-KTx 8.7.